We begin with the raw amino-acid sequence, 214 residues long: Probable transaldolase (214 aa).

The Schiff-base intermediate with substrate role is filled by Lys83.

The protein belongs to the transaldolase family. Type 3B subfamily.

It is found in the cytoplasm. It catalyses the reaction D-sedoheptulose 7-phosphate + D-glyceraldehyde 3-phosphate = D-erythrose 4-phosphate + beta-D-fructose 6-phosphate. Its pathway is carbohydrate degradation; pentose phosphate pathway; D-glyceraldehyde 3-phosphate and beta-D-fructose 6-phosphate from D-ribose 5-phosphate and D-xylulose 5-phosphate (non-oxidative stage): step 2/3. In terms of biological role, transaldolase is important for the balance of metabolites in the pentose-phosphate pathway. This is Probable transaldolase from Leptospira interrogans serogroup Icterohaemorrhagiae serovar copenhageni (strain Fiocruz L1-130).